A 51-amino-acid polypeptide reads, in one-letter code: Conotoxin Cal6.33 (51 aa).

The first 22 residues, 1–22 (MKLTCVVIIAVLILTACQFTTA), serve as a signal peptide directing secretion. Intrachain disulfides connect cysteine 25–cysteine 39, cysteine 32–cysteine 43, and cysteine 38–cysteine 50.

This sequence belongs to the conotoxin O1 superfamily. Expressed by the venom duct.

It localises to the secreted. Functionally, probable neurotoxin. This Californiconus californicus (California cone) protein is Conotoxin Cal6.33.